Reading from the N-terminus, the 314-residue chain is Ribosome production factor 2 homolog (314 aa).

In terms of domain architecture, Brix spans 28–238 (KKTLILHGTK…IRRNRLPNDS (211 aa)). The interval 238-314 (SLMKEAMRTS…VAKKMKVSSE (77 aa)) is disordered. Composition is skewed to basic and acidic residues over residues 239–249 (LMKEAMRTSKD) and 275–314 (QKLK…VSSE).

Belongs to the RPF2 family.

Its subcellular location is the nucleus. It localises to the nucleolus. The protein is Ribosome production factor 2 homolog of Arabidopsis thaliana (Mouse-ear cress).